The sequence spans 127 residues: Small ribosomal subunit protein uS13 (127 aa).

Residues 100-127 (GQRTRTNARTRKGVRKTVAGKKKAPAKK) form a disordered region. Residues 101–127 (QRTRTNARTRKGVRKTVAGKKKAPAKK) are compositionally biased toward basic residues.

This sequence belongs to the universal ribosomal protein uS13 family. Part of the 30S ribosomal subunit. Forms a loose heterodimer with protein S19. Forms two bridges to the 50S subunit in the 70S ribosome.

Located at the top of the head of the 30S subunit, it contacts several helices of the 16S rRNA. In the 70S ribosome it contacts the 23S rRNA (bridge B1a) and protein L5 of the 50S subunit (bridge B1b), connecting the 2 subunits; these bridges are implicated in subunit movement. Contacts the tRNAs in the A and P-sites. The polypeptide is Small ribosomal subunit protein uS13 (Synechococcus sp. (strain JA-3-3Ab) (Cyanobacteria bacterium Yellowstone A-Prime)).